The primary structure comprises 988 residues: Echinoderm microtubule-associated protein-like 4 (988 aa).

Residue Met1 is modified to N-acetylmethionine. The microtubule-binding stretch occupies residues 1–260; that stretch reads MDGFAGSLDD…IPSDVDNYDD (260 aa). Residues Ser7, Ser13, Ser16, Ser61, and Ser79 each carry the phosphoserine modification. The stretch at 14-63 forms a coiled coil; the sequence is AASTSDVQDRLSALESRVQQQEDEITVLKAALADVLRRLAISEDHVASVK. Position 96 is a phosphothreonine (Thr96). Residues 106-194 are disordered; the sequence is TLSSAAKSGT…WENSDDSRNK (89 aa). A compositionally biased stretch (basic and acidic residues) spans 114-134; sequence GTEKKKEKPQGQREKKEDSHS. At Ser134 the chain carries Phosphoserine; by NEK7. Residues 137–155 show a composition bias toward low complexity; it reads QSPQIRASPSPQPSSQPLQ. The residue at position 144 (Ser144) is a Phosphoserine; by NEK6. Ser146 bears the Phosphoserine; by NEK7 mark. A compositionally biased stretch (polar residues) spans 156–168; it reads INRQTPESKSSAP. At Ser171 the chain carries Phosphoserine. Positions 176–193 are enriched in basic and acidic residues; the sequence is PTAEKSHNSWENSDDSRN. Residue Ser200 is modified to Phosphoserine. A Phosphothreonine modification is found at Thr201. Tyr237 is modified (phosphotyrosine). Position 248 is a phosphothreonine (Thr248). 13 WD repeats span residues 270-308, 312-359, 367-407, 414-449, 456-495, 511-549, 554-590, 593-632, 636-673, 679-715, 722-761, 771-829, and 836-875; these read LKLEWVYGYRGKDCRANVYLLPTGEIVYFIASVVVLFNY, TQRH…VWDS, VIGL…VWDW, AEIKTTNEVVLAVEFHPTDANTIITCGKSHIFFWTW, RKQGIFGKYEKPKFVQCLAFLGNGDVLTGDSGGVMLIWSK, QINRQIKAHDGSVFTLCQMRNGMLLTGGGKDRKIILWDH, EREIEVPDQYGTIRAVAEGRAEQFLVGTSRNFILRGT, DGFQIEVQGHRDELWGLATHPFKDLLLTCAQDRQVCMWNS, RLEWTRLVDEPGHCADFHPSGTVVAIGTHSGRWFVLDA, VSIHTDGNEQLSVMRYSVDGTLLAVGSHDNFIYLYTV, YSRYGKCTGHSSYITHLDWSPDNKHIMSNSGDYEILYWDI, RSDC…LFQY, and APSHKYSAHSSHVTNVSFTHNDSHLISTGGKDMSIIQWKL. Position 620 is a phosphothreonine; by NEK6 and NEK7 (Thr620). The disordered stretch occupies residues 887–988; it reads ITDASVTKTP…EEERGITPLC (102 aa). Polar residues predominate over residues 890–904; that stretch reads ASVTKTPASSSETAR. Residues Ser906, Ser908, and Ser914 each carry the phosphoserine modification. The segment covering 927-939 has biased composition (polar residues); the sequence is MGSSPTLVENSLE. The span at 944–953 shows a compositional bias: acidic residues; the sequence is PSEEQSEWGS.

This sequence belongs to the WD repeat EMAP family. Homotrimer; self-association is mediated by the N-terminal coiled coil. Interacts (via WD repeats) with NUDC. Interacts with alpha- and beta-tubulin during mitosis. Post-translationally, phosphorylated during mitosis. Phosphorylation at Ser-144 and Ser-146 promotes its dissociation from microtubules during mitosis which is required for efficient chromosome congression.

It is found in the cytoplasm. It localises to the cytoskeleton. The protein localises to the spindle. The protein resides in the microtubule organizing center. Its subcellular location is the midbody. In terms of biological role, essential for the stability of microtubules (MTs). Essential for the formation of MTs. Required for the organization of the mitotic spindle and for the proper attachment of kinetochores to MTs. Promotes the recruitment of NUDC to the mitotic spindle for mitotic progression. The polypeptide is Echinoderm microtubule-associated protein-like 4 (Eml4) (Mus musculus (Mouse)).